Consider the following 43-residue polypeptide: Photosystem I reaction center subunit IX (43 aa).

Residues 7-27 (YLSTAPVLSTIWFGSLAGLLI) form a helical membrane-spanning segment.

The protein belongs to the PsaJ family.

The protein localises to the plastid. It is found in the chloroplast thylakoid membrane. Functionally, may help in the organization of the PsaE and PsaF subunits. The chain is Photosystem I reaction center subunit IX from Vitis vinifera (Grape).